A 233-amino-acid chain; its full sequence is Large ribosomal subunit protein uL1 (233 aa).

It belongs to the universal ribosomal protein uL1 family. Part of the 50S ribosomal subunit.

Binds directly to 23S rRNA. The L1 stalk is quite mobile in the ribosome, and is involved in E site tRNA release. In terms of biological role, protein L1 is also a translational repressor protein, it controls the translation of the L11 operon by binding to its mRNA. In Shewanella baltica (strain OS185), this protein is Large ribosomal subunit protein uL1.